The chain runs to 282 residues: Ribosomal RNA small subunit methyltransferase I (282 aa).

It belongs to the methyltransferase superfamily. RsmI family.

It is found in the cytoplasm. It carries out the reaction cytidine(1402) in 16S rRNA + S-adenosyl-L-methionine = 2'-O-methylcytidine(1402) in 16S rRNA + S-adenosyl-L-homocysteine + H(+). Catalyzes the 2'-O-methylation of the ribose of cytidine 1402 (C1402) in 16S rRNA. This is Ribosomal RNA small subunit methyltransferase I from Pseudomonas aeruginosa (strain ATCC 15692 / DSM 22644 / CIP 104116 / JCM 14847 / LMG 12228 / 1C / PRS 101 / PAO1).